We begin with the raw amino-acid sequence, 201 residues long: Small ribosomal subunit protein uS4 (201 aa).

The disordered stretch occupies residues 1 to 42 (MARYTGPVTRKSRRLGTDLVGGDQSFEKRPYPPGQHGRARIK). The region spanning 91–157 (SRLDNVVYRA…VPFQIARETA (67 aa)) is the S4 RNA-binding domain.

This sequence belongs to the universal ribosomal protein uS4 family. In terms of assembly, part of the 30S ribosomal subunit. Contacts protein S5. The interaction surface between S4 and S5 is involved in control of translational fidelity.

Functionally, one of the primary rRNA binding proteins, it binds directly to 16S rRNA where it nucleates assembly of the body of the 30S subunit. In terms of biological role, with S5 and S12 plays an important role in translational accuracy. The chain is Small ribosomal subunit protein uS4 from Mycobacterium marinum (strain ATCC BAA-535 / M).